The sequence spans 404 residues: F-box protein At3g57590 (404 aa).

The region spanning 1-47 (MEPIPNDLILEIFSRLPAKSVIGFRTLSKHWASILRSPVFTELFLTR) is the F-box domain.

The polypeptide is F-box protein At3g57590 (Arabidopsis thaliana (Mouse-ear cress)).